Consider the following 920-residue polypeptide: Rho guanine nucleotide exchange factor 1 (920 aa).

Residues 39–230 (DQNSQFQSLE…SLYMRHLGVR (192 aa)) form the RGSL domain. The interval 231–404 (TKSGDKKSGR…PGWRELVPPD (174 aa)) is disordered. Positions 281–311 (DCRHLKVEADAEKPGPADRKGGLGMSSRDRT) are enriched in basic and acidic residues. Positions 364-380 (STEDNGETESPEPGDDG) are enriched in acidic residues. Serine 373, glycine 386, glutamate 390, serine 408, and serine 412 each carry phosphoserine. The DH domain occupies 415–604 (KRQEVISELL…REILHHVNQA (190 aa)). A phosphothreonine mark is found at arginine 432 and threonine 694. The PH domain occupies 646–759 (KLVHEGPLTW…WCNLITETAG (114 aa)). Tyrosine 737 carries the phosphotyrosine; by JAK2 modification. 2 disordered regions span residues 764–797 (PAPASRLKPRPSPSSIREPLLSSSENGTGGAEMA) and 840–864 (TEEDSGAGPPRDGDGVPGGRAPGPV). Residues 865–894 (HTQEIEENLLSLEVAIRQLEELEEEFCRLR) adopt a coiled-coil conformation. Phosphoserine is present on serine 905.

In terms of assembly, interacts with RHOA, GNA12 and GNA13. Homooligomerizes through the coiled coil region. Interacts with CTNNAL1. May interact with CCPG1. Post-translationally, phosphorylated by PKCA. Angiotensin-2 induced Tyr-737 phosphorylation is mediated by JAK2. Isoform 5 is phosphorylated at 'Ser-390'. Ubiquitously expressed.

The protein resides in the cytoplasm. It localises to the membrane. Functionally, seems to play a role in the regulation of RhoA GTPase by guanine nucleotide-binding alpha-12 (GNA12) and alpha-13 (GNA13) subunits. Acts as a GTPase-activating protein (GAP) for GNA12 and GNA13, and as guanine nucleotide exchange factor (GEF) for RhoA GTPase. Activated G alpha 13/GNA13 stimulates the RhoGEF activity through interaction with the RGS-like domain. This GEF activity is inhibited by binding to activated GNA12. Mediates angiotensin-2-induced RhoA activation. Isoform 3 and isoform 4 do not homooligomerize and show an enhanced RhoGEF activity. In lymphoid follicles, may trigger activation of GNA13 as part of S1PR2-dependent signaling pathway that leads to inhibition of germinal center (GC) B cell growth and migration outside the GC niche. In Mus musculus (Mouse), this protein is Rho guanine nucleotide exchange factor 1 (Arhgef1).